The following is a 1572-amino-acid chain: Dynein axonemal assembly factor 8 (1572 aa).

4 disordered regions span residues 1–21 (MASE…NWSG), 262–304 (SEEV…HPQS), 324–428 (SLEQ…EILQ), and 849–871 (FQNP…SDSE). The span at 324–335 (SLEQNPENPSQR) shows a compositional bias: polar residues. The span at 336-351 (NEQKEKHHLNKTDHTG) shows a compositional bias: basic and acidic residues. Positions 361–374 (NIQNDSLSDANMSN) are enriched in polar residues. Residues 409-426 (VGREEKDGREEQEKEKEI) are compositionally biased toward basic and acidic residues. Residues 849–865 (FQNPYSRSTQPRSANLR) are compositionally biased toward polar residues. Positions 1249 to 1382 (TVLLLKPRIW…IRDIKTFFPE (134 aa)) are NDK.

In terms of assembly, interacts with DNAI2. Expression is enriched in multiciliated cells in the epidermis and the nephrostomes of the pronephros.

The protein resides in the dynein axonemal particle. It localises to the cytoplasm. In terms of biological role, in cyliated cells, dynein axonemal particle-specific protein required for deployment of ODA to the axoneme. Interacts with outer dynein arm (ODA) subunits. The polypeptide is Dynein axonemal assembly factor 8 (dnaaf8) (Xenopus laevis (African clawed frog)).